The sequence spans 189 residues: Anthranilate synthase component 2 (189 aa).

A Glutamine amidotransferase type-1 domain is found at 1–189 (MILIIDNYDS…QLLRNFLEYS (189 aa)). Residue 52–54 (GPG) coordinates L-glutamine. The active-site Nucleophile; for GATase activity is the C79. Residues Q83 and 129–130 (SL) contribute to the L-glutamine site. Residues H169 and E171 contribute to the active site.

In terms of assembly, tetramer of two components I and two components II.

It is found in the plastid. The protein localises to the chloroplast. It carries out the reaction chorismate + L-glutamine = anthranilate + pyruvate + L-glutamate + H(+). Its pathway is amino-acid biosynthesis; L-tryptophan biosynthesis; L-tryptophan from chorismate: step 1/5. The polypeptide is Anthranilate synthase component 2 (trpG) (Pyropia yezoensis (Susabi-nori)).